We begin with the raw amino-acid sequence, 196 residues long: Interleukin-23 subunit alpha (196 aa).

A signal peptide spans 1 to 21 (MLDCRAIILLWLLPWATQGLA).

The protein belongs to the IL-6 superfamily. In terms of assembly, heterodimer with IL12B; disulfide-linked. The heterodimer is known as interleukin IL-23. Interacts with IL23R; this interaction enables recruitment of IL12RB1.

Its subcellular location is the secreted. In terms of biological role, associates with IL12B to form the pro-inflammatory cytokine IL-23 that plays different roles in innate and adaptive immunity. Released by antigen-presenting cells such as dendritic cells or macrophages, binds to a heterodimeric receptor complex composed of IL12RB1 and IL23R to activate JAK2 and TYK2 which then phosphorylate the receptor to form a docking site leading to the phosphorylation of STAT3 and STAT4. This process leads to activation of several pathways including p38 MAPK or NF-kappa-B and promotes the production of pro-inflammatory cytokines such as interleukin-17A/IL17A. In turn, participates in the early and effective intracellular bacterial clearance. Promotes the expansion and survival of T-helper 17 cells, a CD4-positive helper T-cell subset that produces IL-17, as well as other IL-17-producing cells. The protein is Interleukin-23 subunit alpha (Il23a) of Rattus norvegicus (Rat).